The primary structure comprises 403 residues: NADH-quinone oxidoreductase subunit D (403 aa).

It belongs to the complex I 49 kDa subunit family. In terms of assembly, NDH-1 is composed of 14 different subunits. Subunits NuoB, C, D, E, F, and G constitute the peripheral sector of the complex.

Its subcellular location is the cell inner membrane. It catalyses the reaction a quinone + NADH + 5 H(+)(in) = a quinol + NAD(+) + 4 H(+)(out). NDH-1 shuttles electrons from NADH, via FMN and iron-sulfur (Fe-S) centers, to quinones in the respiratory chain. The immediate electron acceptor for the enzyme in this species is believed to be ubiquinone. Couples the redox reaction to proton translocation (for every two electrons transferred, four hydrogen ions are translocated across the cytoplasmic membrane), and thus conserves the redox energy in a proton gradient. This is NADH-quinone oxidoreductase subunit D from Pelobacter propionicus (strain DSM 2379 / NBRC 103807 / OttBd1).